We begin with the raw amino-acid sequence, 271 residues long: 3-methyl-2-oxobutanoate hydroxymethyltransferase (271 aa).

Residues Asp-51 and Asp-90 each contribute to the Mg(2+) site. Residues 51-52, Asp-90, and Lys-118 each bind 3-methyl-2-oxobutanoate; that span reads DS. Glu-120 contacts Mg(2+). Catalysis depends on Glu-186, which acts as the Proton acceptor.

It belongs to the PanB family. Homodecamer; pentamer of dimers. Mg(2+) serves as cofactor.

It is found in the cytoplasm. It catalyses the reaction 3-methyl-2-oxobutanoate + (6R)-5,10-methylene-5,6,7,8-tetrahydrofolate + H2O = 2-dehydropantoate + (6S)-5,6,7,8-tetrahydrofolate. The protein operates within cofactor biosynthesis; (R)-pantothenate biosynthesis; (R)-pantoate from 3-methyl-2-oxobutanoate: step 1/2. Its function is as follows. Catalyzes the reversible reaction in which hydroxymethyl group from 5,10-methylenetetrahydrofolate is transferred onto alpha-ketoisovalerate to form ketopantoate. The chain is 3-methyl-2-oxobutanoate hydroxymethyltransferase from Xanthomonas oryzae pv. oryzae (strain MAFF 311018).